The primary structure comprises 903 residues: Dynamin-like GTPase msp1, mitochondrial (903 aa).

A mitochondrion-targeting transit peptide spans 1 to 78 (MGISWFLSRF…RFFSFSSISR (78 aa)). Residues 86–103 (LPVAGFSLVAGGAAYIGA) form a helical membrane-spanning segment. A compositionally biased stretch (basic and acidic residues) spans 167 to 188 (VLQAERAKEHRSNSNDKQKSSD). A disordered region spans residues 167 to 198 (VLQAERAKEHRSNSNDKQKSSDNDEDPNDTTV). The chain crosses the membrane as a helical span at residues 198–214 (VGIGAALAASILSVDSV). One can recognise a Dynamin-type G domain in the interval 260-531 (AVTLPSIVVI…LEYTMSKNLQ (272 aa)). The interval 270 to 277 (GSQSSGKS) is G1 motif. Residues Ser273, Ser274, Gly275, Lys276, Ser277, Ser278, and Gly292 each contribute to the GTP site. Residue Ser277 participates in Mg(2+) binding. The tract at residues 296–298 (VTR) is G2 motif. 2 residues coordinate Mg(2+): Thr297 and Asp370. Residues 370-373 (DLPG) are G3 motif. The G4 motif stretch occupies residues 438 to 441 (TKMD). GTP is bound by residues Lys439, Asp441, and Ser468. The tract at residues 467–470 (ISRI) is G5 motif. Residues 691 to 805 (ATSEQVENCV…VLKSRACKHK (115 aa)) form a paddle region region. Cys802 and Cys811 are oxidised to a cystine. The 94-residue stretch at 805-898 (KEAKYTCPEI…KINSLVILEQ (94 aa)) folds into the GED domain.

The protein belongs to the TRAFAC class dynamin-like GTPase superfamily. Dynamin/Fzo/YdjA family. As to quaternary structure, homooligomer. Interacts with cdr1. Cleavage of the transit peptide by mitochondrial processing protease (MPP) produces a long integral membrane form of msp1 (l-msp1). Further processing by a rhomboid protease after the transmembrane regions produces a short peripheral membrane form of msp1 (s-msp1). Both isoforms are required for full activity.

It is found in the mitochondrion inner membrane. The protein resides in the mitochondrion intermembrane space. The catalysed reaction is GTP + H2O = GDP + phosphate + H(+). Dynamin-related GTPase that is essential for normal mitochondrial morphology by mediating fusion of the mitochondrial inner membranes and maintaining respiratory chain function. Exists in two forms: the transmembrane, long form (Dynamin-like GTPase msp1, long form; l-msp1), which is tethered to the inner mitochondrial membrane, and the short soluble form (Dynamin-like GTPase msp1, short form; s-msp1), which results from proteolytic cleavage and localizes in the intermembrane space. Both forms (l-msp1 and s-msp1) cooperate to catalyze the fusion of the mitochondrial inner membrane. Its role in mitochondrial morphology is required for mitochondrial genome maintenance. In terms of biological role, constitutes the transmembrane long form (l-msp1) that plays a central role in mitochondrial inner membrane fusion. L-msp1 and the soluble short form (s-msp1) form higher-order helical assemblies that coordinate the fusion of mitochondrial inner membranes. Inner membrane-anchored l-msp1 molecules initiate membrane remodeling by recruiting soluble s-msp1 to rapidly polymerize into a flexible cylindrical scaffold encaging the mitochondrial inner membrane. Once at the membrane surface, the formation of s-msp1 helices induce bilayer curvature. Msp1 dimerization through the paddle region, which inserts into cardiolipin-containing membrane, promotes GTP hydrolysis and the helical assembly of a flexible msp1 lattice on the membrane, which drives membrane curvature and mitochondrial fusion. Functionally, constitutes the soluble short form (s-msp1) generated by cleavage, which plays a central role in mitochondrial inner membrane fusion. The transmembrane long form (l-msp1) and the s-msp1 form higher-order helical assemblies that coordinate the fusion of mitochondrial inner membranes. Inner membrane-anchored l-msp1 molecules initiate membrane remodeling by recruiting soluble s-msp1 to rapidly polymerize into a flexible cylindrical scaffold encaging the mitochondrial inner membrane. Once at the membrane surface, the formation of s-msp1 helices induce bilayer curvature. Msp1 dimerization through the paddle region, which inserts into cardiolipin-containing membrane, promotes GTP hydrolysis and the helical assembly of a flexible msp1 lattice on the membrane, which drives membrane curvature and mitochondrial fusion. This chain is Dynamin-like GTPase msp1, mitochondrial, found in Schizosaccharomyces pombe (strain 972 / ATCC 24843) (Fission yeast).